The primary structure comprises 150 residues: FAD synthase (150 aa).

Residues 11–12, 16–19, aspartate 96, and tyrosine 124 contribute to the ATP site; these read TF and HPGH.

This sequence belongs to the archaeal FAD synthase family. Homodimer. A divalent metal cation serves as cofactor.

It catalyses the reaction FMN + ATP + H(+) = FAD + diphosphate. It participates in cofactor biosynthesis; FAD biosynthesis; FAD from FMN: step 1/1. Functionally, catalyzes the transfer of the AMP portion of ATP to flavin mononucleotide (FMN) to produce flavin adenine dinucleotide (FAD) coenzyme. This Methanococcus maripaludis (strain C5 / ATCC BAA-1333) protein is FAD synthase.